The chain runs to 254 residues: Phosphomannomutase (254 aa).

Asp16 (nucleophile) is an active-site residue. Mg(2+) contacts are provided by Asp16 and Asp18. The active-site Proton donor/acceptor is Asp18. Alpha-D-mannose 1-phosphate is bound by residues Arg25, Arg129, Arg140, Arg147, Ser185, and Asp187. Mg(2+) contacts are provided by Asp216, Tyr228, Asp230, and Thr233.

This sequence belongs to the eukaryotic PMM family. Homodimer.

It localises to the cytoplasm. The catalysed reaction is alpha-D-mannose 1-phosphate = D-mannose 6-phosphate. It functions in the pathway nucleotide-sugar biosynthesis; GDP-alpha-D-mannose biosynthesis; alpha-D-mannose 1-phosphate from D-fructose 6-phosphate: step 2/2. Functionally, involved in the synthesis of the GDP-mannose and dolichol-phosphate-mannose required for a number of critical mannosyl transfer reactions. Required for maintaining N-linked glycoprotein glycosylation at the neuromuscular junction (NMJ) synaptomatrix, and thus acts in multiple pathways that prevent NMJ structural overgrowth, restrict synaptic bouton differentiation, and limit NMJ neurotransmission strength, in order to maintain viability, coordinate movement, and in adults ensure correct wing positioning. Acts in the NMJ trans-synaptic Wg pathway via glycosylation of synaptic Mmp2 which enables dlp/wg signaling during development. This is Phosphomannomutase from Drosophila melanogaster (Fruit fly).